We begin with the raw amino-acid sequence, 263 residues long: 3-deoxy-manno-octulosonate cytidylyltransferase (263 aa).

This sequence belongs to the KdsB family.

It is found in the cytoplasm. It carries out the reaction 3-deoxy-alpha-D-manno-oct-2-ulosonate + CTP = CMP-3-deoxy-beta-D-manno-octulosonate + diphosphate. Its pathway is nucleotide-sugar biosynthesis; CMP-3-deoxy-D-manno-octulosonate biosynthesis; CMP-3-deoxy-D-manno-octulosonate from 3-deoxy-D-manno-octulosonate and CTP: step 1/1. It functions in the pathway bacterial outer membrane biogenesis; lipopolysaccharide biosynthesis. In terms of biological role, activates KDO (a required 8-carbon sugar) for incorporation into bacterial lipopolysaccharide in Gram-negative bacteria. The protein is 3-deoxy-manno-octulosonate cytidylyltransferase of Burkholderia mallei (strain NCTC 10229).